Here is a 288-residue protein sequence, read N- to C-terminus: ATP synthase gamma chain (288 aa).

It belongs to the ATPase gamma chain family. F-type ATPases have 2 components, CF(1) - the catalytic core - and CF(0) - the membrane proton channel. CF(1) has five subunits: alpha(3), beta(3), gamma(1), delta(1), epsilon(1). CF(0) has three main subunits: a, b and c.

The protein resides in the cell inner membrane. In terms of biological role, produces ATP from ADP in the presence of a proton gradient across the membrane. The gamma chain is believed to be important in regulating ATPase activity and the flow of protons through the CF(0) complex. The sequence is that of ATP synthase gamma chain from Stutzerimonas stutzeri (strain A1501) (Pseudomonas stutzeri).